The sequence spans 561 residues: DISARM protein DrmB (561 aa).

The protein resides in the cytoplasm. Functionally, component of antiviral defense system DISARM (defense island system associated with restriction-modification), composed of DrmE, DrmA, DrmB, DrmC and DrmMII. DISARM is probably a multi-gene restriction module, this subunit has an unknown function. Expression of DISARM in B.subtilis (strain BEST7003) confers resistance to phages Nf, phi29, phi105, phi3T, SPO1, SPR and SPP1. Protection is over 10(7)-fold against phi3T, 10(4)-10(5)-fold against Nf, phi29, phi105 and SPR, 100-fold against SPO1 and 10-fold against SPP1. DISARM does not interfere with phage adsorption, but instead interferes with (phi3T) DNA replication early in its cycle, preventing replication, circularization and lysogeny and probably causes phage DNA degradation (DNA is degraded in SPP1-infected cells). This Bacillus paralicheniformis (strain ATCC 9945a / NCIMB 11709 / CD-2) protein is DISARM protein DrmB.